A 170-amino-acid chain; its full sequence is CASP-like protein 2D1 (170 aa).

Over 1–4 the chain is Cytoplasmic; that stretch reads MLKL. Residues 5-25 form a helical membrane-spanning segment; the sequence is LDFSLRLSVIPLSVATIWLTV. The Extracellular portion of the chain corresponds to 26–47; sequence TNKQDNSIYGYLKYSDLTGLKY. A helical membrane pass occupies residues 48 to 68; it reads MVFISGICASYAFIAAVSTWI. Residues 69 to 83 are Cytoplasmic-facing; it reads RCIVTKTWLFFVSDQ. Residues 84-104 form a helical membrane-spanning segment; sequence IVAYLMVTSGTAVLEILYLAY. Residues 105–127 lie on the Extracellular side of the membrane; that stretch reads NGDREVSWSEACTSYGKFCYRMK. The chain crosses the membrane as a helical span at residues 128-148; the sequence is LAVILHALALSCFIILAVISA. The Cytoplasmic segment spans residues 149 to 170; that stretch reads YRAFSIFEPPLVPSKVVEEDRA.

The protein belongs to the Casparian strip membrane proteins (CASP) family. As to quaternary structure, homodimer and heterodimers.

Its subcellular location is the cell membrane. The polypeptide is CASP-like protein 2D1 (Populus trichocarpa (Western balsam poplar)).